We begin with the raw amino-acid sequence, 142 residues long: Transcriptional regulator MraZ (142 aa).

SpoVT-AbrB domains are found at residues 5–47 and 76–119; these read EYPY…PLPG and ASKA…NPQR.

The protein belongs to the MraZ family. As to quaternary structure, forms oligomers.

It is found in the cytoplasm. Its subcellular location is the nucleoid. This Deinococcus radiodurans (strain ATCC 13939 / DSM 20539 / JCM 16871 / CCUG 27074 / LMG 4051 / NBRC 15346 / NCIMB 9279 / VKM B-1422 / R1) protein is Transcriptional regulator MraZ.